The primary structure comprises 307 residues: NAD kinase 1 (307 aa).

Asp-67 serves as the catalytic Proton acceptor. Residues 67–68 (DG), 149–150 (NE), Arg-160, Asp-181, and 192–197 (TCYTSS) each bind NAD(+).

The protein belongs to the NAD kinase family. A divalent metal cation serves as cofactor.

Its subcellular location is the cytoplasm. It carries out the reaction NAD(+) + ATP = ADP + NADP(+) + H(+). Involved in the regulation of the intracellular balance of NAD and NADP, and is a key enzyme in the biosynthesis of NADP. Catalyzes specifically the phosphorylation on 2'-hydroxyl of the adenosine moiety of NAD to yield NADP. Essential for photoheterotrophic growth. Has a significant function in the oxidative pentose phosphate (OPP) pathway for glucose catabolism under photoheterotrophic conditions. Is also involved in cellular redox homeostasis. The chain is NAD kinase 1 from Synechocystis sp. (strain ATCC 27184 / PCC 6803 / Kazusa).